Here is a 281-residue protein sequence, read N- to C-terminus: NADPH-dependent 7-cyano-7-deazaguanine reductase (281 aa).

86 to 88 (IES) provides a ligand contact to substrate. Residue 88 to 89 (SK) coordinates NADPH. Residue Cys-189 is the Thioimide intermediate of the active site. Asp-196 serves as the catalytic Proton donor. Position 228-229 (228-229 (HE)) interacts with substrate. 257 to 258 (RG) serves as a coordination point for NADPH.

It belongs to the GTP cyclohydrolase I family. QueF type 2 subfamily. As to quaternary structure, homodimer.

Its subcellular location is the cytoplasm. It carries out the reaction 7-aminomethyl-7-carbaguanine + 2 NADP(+) = 7-cyano-7-deazaguanine + 2 NADPH + 3 H(+). Its pathway is tRNA modification; tRNA-queuosine biosynthesis. Catalyzes the NADPH-dependent reduction of 7-cyano-7-deazaguanine (preQ0) to 7-aminomethyl-7-deazaguanine (preQ1). In Mannheimia succiniciproducens (strain KCTC 0769BP / MBEL55E), this protein is NADPH-dependent 7-cyano-7-deazaguanine reductase.